Here is a 352-residue protein sequence, read N- to C-terminus: Ribosome biogenesis protein BRX1 homolog (352 aa).

The tract at residues 1 to 47 (MAATKRKRRGDLEVQAKKPKKNRKDAGQPAKQADVAKEAEEEKDRIP) is disordered. Basic and acidic residues predominate over residues 34–46 (DVAKEAEEEKDRI). The 190-residue stretch at 59–248 (ERILIFSSRG…LIKIFQGSFG (190 aa)) folds into the Brix domain. A Glycyl lysine isopeptide (Lys-Gly) (interchain with G-Cter in SUMO2) cross-link involves residue Lys-159. Ser-260 carries the post-translational modification Phosphoserine. Lys-275 carries the N6-acetyllysine modification. The disordered stretch occupies residues 281–301 (QVKDVQKSRKKEPKTILPHDP). Residues Lys-313 and Lys-321 each participate in a glycyl lysine isopeptide (Lys-Gly) (interchain with G-Cter in SUMO2) cross-link.

Belongs to the BRX1 family.

The protein resides in the nucleus. The protein localises to the nucleolus. Functionally, required for biogenesis of the 60S ribosomal subunit. The protein is Ribosome biogenesis protein BRX1 homolog (Brix1) of Rattus norvegicus (Rat).